Here is a 414-residue protein sequence, read N- to C-terminus: MLSAQQFLKEFNNVESLNESLYEIVSHICEEVKLQGDKALKNYNLQFDQVETEKLELEQSQLKNAYDMLDNETRDALEQSYQRIKVYQENIKVKQESSQQTECYERYHPIERVGIYVPGGKASYPSTVLMTATLAQVAGVNEITVVTPPQNNGICQEVLAACYITGVHHVYQVGGAQSIAALTYGTETIKKVDKIVGPGNQYVAYAKKFVFGQVGIDQIAGPTEIALIIDESADLDAIAYDVFAQAEHDEMACTYVISENEKVLNQLNTIIQEKLQYVERQDIISQSIANHHYLILAQDTEEACLIMNTIAPEHASIQTRAPEMYIDKVKYVGALFLGHFSPEVIGDYMAGPSHVLPTNQTARFTNGLSVNDFMTRHSVIHLSQKTFNEVAESAEHIAHIESLFNHEKSIHVRR.

NAD(+) contacts are provided by tyrosine 116, glutamine 177, and asparagine 200. The substrate site is built by threonine 223, glutamine 245, and histidine 248. Residues glutamine 245 and histidine 248 each contribute to the Zn(2+) site. Catalysis depends on proton acceptor residues glutamate 313 and histidine 314. Substrate contacts are provided by histidine 314, aspartate 347, glutamate 401, and histidine 406. Aspartate 347 is a binding site for Zn(2+). Histidine 406 serves as a coordination point for Zn(2+).

This sequence belongs to the histidinol dehydrogenase family. Zn(2+) serves as cofactor.

The enzyme catalyses L-histidinol + 2 NAD(+) + H2O = L-histidine + 2 NADH + 3 H(+). Its pathway is amino-acid biosynthesis; L-histidine biosynthesis; L-histidine from 5-phospho-alpha-D-ribose 1-diphosphate: step 9/9. In terms of biological role, catalyzes the sequential NAD-dependent oxidations of L-histidinol to L-histidinaldehyde and then to L-histidine. This chain is Histidinol dehydrogenase, found in Staphylococcus epidermidis (strain ATCC 12228 / FDA PCI 1200).